The primary structure comprises 114 residues: Dolichyl-diphosphooligosaccharide--protein glycosyltransferase subunit DAD2 (114 aa).

Residues 1–30 (MPKAAGDAKLLIQSLNKAYAATPTNLKIID) lie on the Cytoplasmic side of the membrane. Residues 31-51 (LYVVFAVATALVQVVYMGIVG) traverse the membrane as a helical segment. Residues 52–54 (SFP) are Lumenal-facing. The helical transmembrane segment at 55 to 75 (FNSFLSGVLSSIGTAVLGVCL) threads the bilayer. The Cytoplasmic segment spans residues 76-93 (RIQVNKDNKEFKDLPPER). The helical transmembrane segment at 94 to 114 (AFADFVLCNLVLHLVIMNFLG) threads the bilayer.

This sequence belongs to the DAD/OST2 family. In terms of assembly, component of the oligosaccharyltransferase (OST) complex.

It is found in the endoplasmic reticulum membrane. The protein operates within protein modification; protein glycosylation. In terms of biological role, subunit of the oligosaccharyl transferase (OST) complex that catalyzes the initial transfer of a defined glycan (Glc(3)Man(9)GlcNAc(2) in eukaryotes) from the lipid carrier dolichol-pyrophosphate to an asparagine residue within an Asn-X-Ser/Thr consensus motif in nascent polypeptide chains, the first step in protein N-glycosylation. N-glycosylation occurs cotranslationally and the complex associates with the Sec61 complex at the channel-forming translocon complex that mediates protein translocation across the endoplasmic reticulum (ER). All subunits are required for a maximal enzyme activity. This chain is Dolichyl-diphosphooligosaccharide--protein glycosyltransferase subunit DAD2 (DAD2), found in Hordeum vulgare (Barley).